A 274-amino-acid chain; its full sequence is 4-diphosphocytidyl-2-C-methyl-D-erythritol kinase (274 aa).

K10 is an active-site residue. 101–111 contributes to the ATP binding site; it reads PTQAGLGGGSA. D143 is an active-site residue.

This sequence belongs to the GHMP kinase family. IspE subfamily.

It carries out the reaction 4-CDP-2-C-methyl-D-erythritol + ATP = 4-CDP-2-C-methyl-D-erythritol 2-phosphate + ADP + H(+). It participates in isoprenoid biosynthesis; isopentenyl diphosphate biosynthesis via DXP pathway; isopentenyl diphosphate from 1-deoxy-D-xylulose 5-phosphate: step 3/6. Its function is as follows. Catalyzes the phosphorylation of the position 2 hydroxy group of 4-diphosphocytidyl-2C-methyl-D-erythritol. The sequence is that of 4-diphosphocytidyl-2-C-methyl-D-erythritol kinase from Helicobacter pylori (strain J99 / ATCC 700824) (Campylobacter pylori J99).